The chain runs to 1829 residues: Iron-regulated protein FrpC (1829 aa).

Hemolysin-type calcium-binding repeat units lie at residues 869 to 886 (FGHN…NDTL), 887 to 904 (IGGA…SDTY), 1015 to 1032 (NGGL…DDLL), 1033 to 1050 (NGDA…NDTL), 1051 to 1068 (DGGE…NDAL), 1069 to 1086 (NGGE…NDTL), 1087 to 1104 (IGGA…SDTY), 1215 to 1232 (NGGL…DDLL), 1233 to 1250 (NGDA…NDTL), 1251 to 1268 (DGGE…NDAL), 1269 to 1286 (NGGE…NDTL), 1287 to 1304 (IGGA…SDTY), 1415 to 1432 (NGGL…DDLL), 1433 to 1450 (NGDA…NDTL), 1451 to 1468 (NGGE…NDAL), 1469 to 1486 (NGGE…NDTL), 1487 to 1504 (IGGA…SDTY), 1615 to 1632 (NGGL…DDLL), 1633 to 1650 (NGDA…NDTL), 1651 to 1668 (DGGE…NDAL), 1669 to 1686 (NGGE…NDTL), and 1687 to 1704 (IGGA…SDTY). Residues 1671-1690 (GEGNDHLNGEDGNDTLIGGA) are disordered.

Belongs to the RTX prokaryotic toxin (TC 1.C.11) family.

The protein localises to the cell outer membrane. The protein resides in the secreted. In terms of biological role, may participate in the pathogenesis of meningococcal disease. This chain is Iron-regulated protein FrpC (frpC), found in Neisseria meningitidis serogroup B (strain ATCC BAA-335 / MC58).